A 403-amino-acid chain; its full sequence is Tryptophan 2,3-dioxygenase (403 aa).

69–73 (FIVIH) provides a ligand contact to substrate. Residues 133–135 (PLD) carry the PLD motif; required for enzymatic activity motif. Substrate is bound at residue R140. Residue H327 participates in heme binding. T341 is a substrate binding site.

It belongs to the tryptophan 2,3-dioxygenase family. In terms of assembly, homotetramer. Dimer of dimers. It depends on heme as a cofactor. In terms of tissue distribution, expressed in body wall muscle cells, hypodermis, PLM neurons and touch-receptor neurons.

The enzyme catalyses L-tryptophan + O2 = N-formyl-L-kynurenine. The protein operates within amino-acid degradation; L-tryptophan degradation via kynurenine pathway; L-kynurenine from L-tryptophan: step 1/2. Heme-dependent dioxygenase that catalyzes the oxidative cleavage of the L-tryptophan (L-Trp) pyrrole ring and converts L-tryptophan to N-formyl-L-kynurenine. Catalyzes the oxidative cleavage of the indole moiety. Involved in regulation of protein homeostasis, longevity and reproducive life span. Specifically regulates proteotoxicity due to age-related aggregation of proteins like alpha-synuclein, via its effects on tryptophan metabolism. The polypeptide is Tryptophan 2,3-dioxygenase (Caenorhabditis elegans).